We begin with the raw amino-acid sequence, 1034 residues long: Platelet endothelial aggregation receptor 1 (1034 aa).

Positions 1–18 are cleaved as a signal peptide; it reads MPLCPLLLLALGLRLTGT. The Extracellular segment spans residues 19 to 754; it reads LNSNDPNVCT…PTSPVTHNSL (736 aa). The EMI domain occupies 23 to 101; that stretch reads DPNVCTFWES…YYESRGACVP (79 aa). 3 cysteine pairs are disulfide-bonded: C27–C89, C53–C63, and C88–C99. The N-linked (GlcNAc...) asparagine glycan is linked to N150. 5 EGF-like domains span residues 181–215, 223–258, 266–301, 309–344, and 398–433; these read YGPA…PSCN, DGFF…VICS, HGPN…DRCQ, FGQD…DRCT, and HGPG…PHCA. Intrachain disulfides connect C185/C196, C189/C203, C205/C214, C233/C246, and C248/C257. An N-linked (GlcNAc...) asparagine glycan is attached at N269. 9 disulfides stabilise this stretch: C270–C282, C276–C289, C291–C300, C313–C325, C319–C332, C334–C343, C402–C414, C408–C421, and C423–C432. N-linked (GlcNAc...) asparagine glycosylation is present at N474. 4 consecutive EGF-like domains span residues 484–519, 575–605, 613–648, and 656–691; these read WGFN…AHCQ, SNTC…PSCQ, YGKR…PDCS, and WGLK…PNCL. Cystine bridges form between C488/C500, C494/C507, C509/C518, C578/C586, C580/C593, C595/C604, C617/C629, C622/C636, C638/C647, C660/C672, C666/C679, and C681/C690. The chain crosses the membrane as a helical span at residues 755–775; sequence GAVIGIAVLGTLVVALIALFI. Residues 776–1034 lie on the Cytoplasmic side of the membrane; the sequence is GYRQWQKGKE…PSPPSRRQDR (259 aa). The segment at 823 to 883 is disordered; sequence TLSQCSPNPP…PHERGASHLD (61 aa). Basic and acidic residues predominate over residues 851–883; the sequence is RPSRAHGRENHVTLPADWKHRREPHERGASHLD. At Y923 the chain carries Phosphotyrosine. The disordered stretch occupies residues 925–1034; the sequence is TIRDLPSLPG…PSPPSRRQDR (110 aa). S951 carries the phosphoserine modification. Residues 972-991 are compositionally biased toward polar residues; it reads DSGTYEQPSPLSHNEESLGS. S1026 carries the phosphoserine modification.

It belongs to the MEGF family. Interacts with SHC2 upon its aggregation-induced tyrosine phosphorylation. Interacts (via extracellular domain) with SVEP1. In terms of processing, phosphorylated in the intracellular domain on tyrosine residues. Phosphorylated on tyrosine residues by SRC. Tyrosine phosphorylation is detected upon platelet aggregation stimulated by collagen, TRAP and thrombin and platelet-platelet contacts but not after platelet activation. Tyrosine phosphorylation enhanced its association with SHC1 and SHC2. Phosphorylated in the intracellular domain on tyrosine residues. Phosphorylated when in the presence of SVEP1. Expressed in thymocytes, bone marrow stromal and osteogenic cells (at protein level). Strongly expressed in kidney and heart. Moderately expressed in lung, spleen, thymus, liver, brain, testis, skin and stomach. Expressed in hematopoietic stem progenitor cells.

It is found in the cell membrane. Its subcellular location is the cell projection. It localises to the lamellipodium. In terms of biological role, required for SVEP1-mediated platelet activation, via its interaction with SVEP1 and subsequent activation of AKT/mTOR signaling. May be involved in the early stages of hematopoiesis. This is Platelet endothelial aggregation receptor 1 (Pear1) from Mus musculus (Mouse).